The chain runs to 163 residues: Transcription antitermination protein NusB (163 aa).

This sequence belongs to the NusB family.

Functionally, involved in transcription antitermination. Required for transcription of ribosomal RNA (rRNA) genes. Binds specifically to the boxA antiterminator sequence of the ribosomal RNA (rrn) operons. The chain is Transcription antitermination protein NusB from Granulibacter bethesdensis (strain ATCC BAA-1260 / CGDNIH1).